The primary structure comprises 150 residues: Large ribosomal subunit protein bL9 (150 aa).

The protein belongs to the bacterial ribosomal protein bL9 family.

Functionally, binds to the 23S rRNA. This chain is Large ribosomal subunit protein bL9, found in Corynebacterium glutamicum (strain ATCC 13032 / DSM 20300 / JCM 1318 / BCRC 11384 / CCUG 27702 / LMG 3730 / NBRC 12168 / NCIMB 10025 / NRRL B-2784 / 534).